The primary structure comprises 321 residues: Acetyl-coenzyme A carboxylase carboxyl transferase subunit alpha (321 aa).

A CoA carboxyltransferase C-terminal domain is found at 32–293 (DISEEIARLQ…KRVLQDQLKE (262 aa)).

Belongs to the AccA family. Acetyl-CoA carboxylase is a heterohexamer composed of biotin carboxyl carrier protein (AccB), biotin carboxylase (AccC) and two subunits each of ACCase subunit alpha (AccA) and ACCase subunit beta (AccD).

It localises to the cytoplasm. It carries out the reaction N(6)-carboxybiotinyl-L-lysyl-[protein] + acetyl-CoA = N(6)-biotinyl-L-lysyl-[protein] + malonyl-CoA. The protein operates within lipid metabolism; malonyl-CoA biosynthesis; malonyl-CoA from acetyl-CoA: step 1/1. Its function is as follows. Component of the acetyl coenzyme A carboxylase (ACC) complex. First, biotin carboxylase catalyzes the carboxylation of biotin on its carrier protein (BCCP) and then the CO(2) group is transferred by the carboxyltransferase to acetyl-CoA to form malonyl-CoA. This Chromobacterium violaceum (strain ATCC 12472 / DSM 30191 / JCM 1249 / CCUG 213 / NBRC 12614 / NCIMB 9131 / NCTC 9757 / MK) protein is Acetyl-coenzyme A carboxylase carboxyl transferase subunit alpha.